The primary structure comprises 474 residues: L-arabinose isomerase (474 aa).

Positions 306, 331, 348, and 447 each coordinate Mn(2+).

Belongs to the arabinose isomerase family. Mn(2+) serves as cofactor.

The enzyme catalyses beta-L-arabinopyranose = L-ribulose. It participates in carbohydrate degradation; L-arabinose degradation via L-ribulose; D-xylulose 5-phosphate from L-arabinose (bacterial route): step 1/3. Its function is as follows. Catalyzes the conversion of L-arabinose to L-ribulose. This Leuconostoc mesenteroides subsp. mesenteroides (strain ATCC 8293 / DSM 20343 / BCRC 11652 / CCM 1803 / JCM 6124 / NCDO 523 / NBRC 100496 / NCIMB 8023 / NCTC 12954 / NRRL B-1118 / 37Y) protein is L-arabinose isomerase.